A 145-amino-acid polypeptide reads, in one-letter code: Methyl-coenzyme M reductase I operon protein D (145 aa).

As to quaternary structure, MCR is composed of three subunits: alpha, beta, and gamma. The function of proteins C and D is not known.

The protein is Methyl-coenzyme M reductase I operon protein D (mcrD) of Methanothermobacter thermautotrophicus (strain ATCC 29096 / DSM 1053 / JCM 10044 / NBRC 100330 / Delta H) (Methanobacterium thermoautotrophicum).